The primary structure comprises 356 residues: Histidinol-phosphate aminotransferase (356 aa).

Residue Lys-214 is modified to N6-(pyridoxal phosphate)lysine.

Belongs to the class-II pyridoxal-phosphate-dependent aminotransferase family. Histidinol-phosphate aminotransferase subfamily. In terms of assembly, homodimer. Pyridoxal 5'-phosphate serves as cofactor.

It carries out the reaction L-histidinol phosphate + 2-oxoglutarate = 3-(imidazol-4-yl)-2-oxopropyl phosphate + L-glutamate. It participates in amino-acid biosynthesis; L-histidine biosynthesis; L-histidine from 5-phospho-alpha-D-ribose 1-diphosphate: step 7/9. This is Histidinol-phosphate aminotransferase from Escherichia coli O45:K1 (strain S88 / ExPEC).